The primary structure comprises 335 residues: Nuclear distribution protein nudE homolog 1 (335 aa).

Residues 1-93 (MEDSGKTFSS…VQHSEGYRQI (93 aa)) are self-association. Residues 18-188 (WKDLAMTYKQ…ELAVQQKQEK (171 aa)) adopt a coiled-coil conformation. The segment at 88 to 156 (EGYRQISALE…ERNAFLESEL (69 aa)) is interaction with PAFAH1B1. Residues 167–290 (QRLKDEARDL…QSPNRTGGPA (124 aa)) form an interaction with CENPF region. The interval 181–246 (AVQQKQEKPR…DDSTGGTPLT (66 aa)) is disordered. A compositionally biased stretch (polar residues) spans 204–214 (TAVQATGSVPS). A Phosphoserine modification is found at Ser211. A phosphothreonine mark is found at Thr215 and Thr228. Ser231 and Ser239 each carry phosphoserine. Residues Thr243 and Thr246 each carry the phosphothreonine modification. Cys274 is lipidated: S-palmitoyl cysteine; by ZDHHC2, ZDHHC3 and ZDHHC7. Residues 279–335 (YDQSPNRTGGPASGRSSKNRDGGERRPSSTSVPLGDKGLDTSCRWLSKSTTRSSSSC) form a disordered region. Residue Ser282 is modified to Phosphoserine. Basic and acidic residues predominate over residues 296–305 (KNRDGGERRP). Ser309 carries the phosphoserine modification. A compositionally biased stretch (low complexity) spans 325–335 (SKSTTRSSSSC).

Belongs to the nudE family. In terms of assembly, homodimer. Interacts with CNTRL, LIS1, dynein, SLMAP and TCP1. Interacts with CENPF, dynactin, tubulin gamma, PAFAH1B1, PCM1 and PCNT. Interacts with ZNF365. Interacts with GTP-bound RAB9A and RAB9B; the interaction leads to RAB9-dynein motor tethering. Interacts (via C-terminus) with MCRS1 (via C-terminus); phosphorylation of NDE1 inhibits the interaction. In terms of processing, phosphorylated in mitosis. Phosphorylated in vitro by CDC2. Phosphorylation at Thr-246 is essential for the G2/M transition. In terms of tissue distribution, expressed in the neuroepithelium throughout the developing brain, including the cerebral cortex and cerebellum.

It is found in the cytoplasm. It localises to the cytoskeleton. Its subcellular location is the microtubule organizing center. The protein resides in the centrosome. The protein localises to the chromosome. It is found in the centromere. It localises to the kinetochore. Its subcellular location is the spindle. The protein resides in the cleavage furrow. The protein localises to the cytoplasmic vesicle membrane. Functionally, required for centrosome duplication and formation and function of the mitotic spindle. Essential for the development of the cerebral cortex. May regulate the production of neurons by controlling the orientation of the mitotic spindle during division of cortical neuronal progenitors of the proliferative ventricular zone of the brain. Orientation of the division plane perpendicular to the layers of the cortex gives rise to two proliferative neuronal progenitors whereas parallel orientation of the division plane yields one proliferative neuronal progenitor and a postmitotic neuron. A premature shift towards a neuronal fate within the progenitor population may result in an overall reduction in the final number of neurons and an increase in the number of neurons in the deeper layers of the cortex. Acts as a RAB9A/B effector that tethers RAB9-associated late endosomes to the dynein motor for their retrograde transport to the trans-Golgi network. In Homo sapiens (Human), this protein is Nuclear distribution protein nudE homolog 1.